The following is a 147-amino-acid chain: Nucleoside diphosphate kinase (147 aa).

Residues lysine 9, phenylalanine 57, arginine 85, threonine 91, arginine 102, and asparagine 112 each coordinate ATP. Residue histidine 115 is the Pros-phosphohistidine intermediate of the active site.

Belongs to the NDK family. Homotetramer. The cofactor is Mg(2+).

It localises to the cytoplasm. It carries out the reaction a 2'-deoxyribonucleoside 5'-diphosphate + ATP = a 2'-deoxyribonucleoside 5'-triphosphate + ADP. The catalysed reaction is a ribonucleoside 5'-diphosphate + ATP = a ribonucleoside 5'-triphosphate + ADP. Its function is as follows. Major role in the synthesis of nucleoside triphosphates other than ATP. The ATP gamma phosphate is transferred to the NDP beta phosphate via a ping-pong mechanism, using a phosphorylated active-site intermediate. The protein is Nucleoside diphosphate kinase of Thermosipho melanesiensis (strain DSM 12029 / CIP 104789 / BI429).